We begin with the raw amino-acid sequence, 148 residues long: uncharacterized protein (148 aa).

An HTH asnC-type domain is found at 3–64; that stretch reads LDALDRKILE…KLNYESIGYD (62 aa). Residues 22–41 constitute a DNA-binding region (H-T-H motif); it reads YREIAKDLNVAVGTIYNRIK.

This is an uncharacterized protein from Pyrococcus horikoshii (strain ATCC 700860 / DSM 12428 / JCM 9974 / NBRC 100139 / OT-3).